A 486-amino-acid chain; its full sequence is NADH-quinone oxidoreductase subunit N (486 aa).

The next 14 helical transmembrane spans lie at 8–28, 36–56, 74–94, 104–124, 125–145, 160–180, 204–224, 239–259, 270–290, 298–318, 329–349, 374–394, 407–427, and 459–479; these read LIALLPFLILLLTVVIVILSI, FIAFLTIISLIVSLCSLYFLI, ILYISMIIISSIATCVFAYPW, EFYLLTLISTLGAIFLTISNH, MASLFISVELMSLPIFGLIAY, LVLSGVSSSFLLLGISWIYAI, VLFGIIMVLMSFFFKLSMVPF, VLSFFSVSGKIAIFSILLYFF, IFLILSLISFFSILFGNLMAI, FFGYSSISQIGYLLIILLVSK, GIFLLNYLCTNIVYFGVINLF, ASIVTIVLLSLGGIPITLGFF, HLWTIGASFLIGTILGLYGYL, and ILIFISGIMLLILGIYPNPLI.

The protein belongs to the complex I subunit 2 family. NDH-1 is composed of 13 different subunits. Subunits NuoA, H, J, K, L, M, N constitute the membrane sector of the complex.

The protein resides in the cell membrane. The enzyme catalyses a quinone + NADH + 5 H(+)(in) = a quinol + NAD(+) + 4 H(+)(out). In terms of biological role, NDH-1 shuttles electrons from NADH, via FMN and iron-sulfur (Fe-S) centers, to quinones in the respiratory chain. The immediate electron acceptor for the enzyme in this species is believed to be ubiquinone. Couples the redox reaction to proton translocation (for every two electrons transferred, four hydrogen ions are translocated across the cytoplasmic membrane), and thus conserves the redox energy in a proton gradient. The sequence is that of NADH-quinone oxidoreductase subunit N from Buchnera aphidicola subsp. Schizaphis graminum (strain Sg).